Reading from the N-terminus, the 702-residue chain is Polyribonucleotide nucleotidyltransferase 1 (702 aa).

Asp483 and Asp489 together coordinate Mg(2+). Residues 550-609 enclose the KH domain; the sequence is PQVTKLKVHPDKVREVIGAGGKVINKIIDETGVKINIENDGTIYIAAPDQESARVALEMI. An S1 motif domain is found at 619–687; that stretch reads GEVYTGKVIK…PQGKIGLSRK (69 aa).

The protein belongs to the polyribonucleotide nucleotidyltransferase family. Mg(2+) serves as cofactor.

The protein resides in the cytoplasm. The catalysed reaction is RNA(n+1) + phosphate = RNA(n) + a ribonucleoside 5'-diphosphate. Its function is as follows. Involved in mRNA degradation. Catalyzes the phosphorolysis of single-stranded polyribonucleotides processively in the 3'- to 5'-direction. The protein is Polyribonucleotide nucleotidyltransferase 1 of Alkaliphilus metalliredigens (strain QYMF).